Reading from the N-terminus, the 232-residue chain is Heptaprenylglyceryl phosphate synthase (232 aa).

Lysine 12 is a binding site for sn-glycerol 1-phosphate. The Mg(2+) site is built by aspartate 14 and threonine 40. Residues tyrosine 159 to glycine 164, glycine 189, and glycine 209 to asparagine 210 contribute to the sn-glycerol 1-phosphate site.

Belongs to the GGGP/HepGP synthase family. Group I subfamily. As to quaternary structure, homodimer. Mg(2+) is required as a cofactor.

The catalysed reaction is sn-glycerol 1-phosphate + all-trans-heptaprenyl diphosphate = 3-heptaprenyl-sn-glycero-1-phosphate + diphosphate. It participates in membrane lipid metabolism; glycerophospholipid metabolism. Its function is as follows. Prenyltransferase that catalyzes in vivo the transfer of the heptaprenyl moiety of heptaprenyl pyrophosphate (HepPP; 35 carbon atoms) to the C3 hydroxyl of sn-glycerol-1-phosphate (G1P), producing heptaprenylglyceryl phosphate (HepGP). This reaction is an ether-bond-formation step in the biosynthesis of archaea-type G1P-based membrane lipids found in Bacillales. This chain is Heptaprenylglyceryl phosphate synthase, found in Shouchella clausii (strain KSM-K16) (Alkalihalobacillus clausii).